A 442-amino-acid chain; its full sequence is Trigger factor (442 aa).

The PPIase FKBP-type domain occupies 165-250 (DDRVIIDFEG…LQKVMAPELP (86 aa)).

The protein belongs to the FKBP-type PPIase family. Tig subfamily.

It is found in the cytoplasm. It carries out the reaction [protein]-peptidylproline (omega=180) = [protein]-peptidylproline (omega=0). Involved in protein export. Acts as a chaperone by maintaining the newly synthesized protein in an open conformation. Functions as a peptidyl-prolyl cis-trans isomerase. The sequence is that of Trigger factor from Coxiella burnetii (strain RSA 493 / Nine Mile phase I).